The primary structure comprises 137 residues: Putative pre-16S rRNA nuclease (137 aa).

It belongs to the YqgF nuclease family.

The protein localises to the cytoplasm. Its function is as follows. Could be a nuclease involved in processing of the 5'-end of pre-16S rRNA. This is Putative pre-16S rRNA nuclease from Oceanobacillus iheyensis (strain DSM 14371 / CIP 107618 / JCM 11309 / KCTC 3954 / HTE831).